The sequence spans 270 residues: Monofunctional glycosyltransferase (270 aa).

A compositionally biased stretch (polar residues) spans 1-10 (MKRSQRMNNS). The segment at 1–36 (MKRSQRMNNSPERHSQYRNEPHYNTYYQPVGKPPKK) is disordered. Over residues 11 to 21 (PERHSQYRNEP) the composition is skewed to basic and acidic residues. A helical transmembrane segment spans residues 42–62 (IFLRLFIIFVFIYALFIGLMY).

It belongs to the glycosyltransferase 51 family.

Its subcellular location is the cell membrane. The enzyme catalyses [GlcNAc-(1-&gt;4)-Mur2Ac(oyl-L-Ala-gamma-D-Glu-L-Lys-D-Ala-D-Ala)](n)-di-trans,octa-cis-undecaprenyl diphosphate + beta-D-GlcNAc-(1-&gt;4)-Mur2Ac(oyl-L-Ala-gamma-D-Glu-L-Lys-D-Ala-D-Ala)-di-trans,octa-cis-undecaprenyl diphosphate = [GlcNAc-(1-&gt;4)-Mur2Ac(oyl-L-Ala-gamma-D-Glu-L-Lys-D-Ala-D-Ala)](n+1)-di-trans,octa-cis-undecaprenyl diphosphate + di-trans,octa-cis-undecaprenyl diphosphate + H(+). The protein operates within cell wall biogenesis; peptidoglycan biosynthesis. Functionally, peptidoglycan polymerase that catalyzes glycan chain elongation using lipid-linked disaccharide-pentapeptide as the substrate. This chain is Monofunctional glycosyltransferase, found in Staphylococcus haemolyticus (strain JCSC1435).